A 192-amino-acid chain; its full sequence is MIVLGVDPGSLKTGYGVVQHHNGSFSVLAAGVIRLQAAWSHPERIGIICRELEQVIAEFQPERVALETAFLSHNVQAALKLGQVRGAVIGLVVRYALPIYEYAPREVKSAITGKGAATKEQVAFMVSRMLSLHTVPKPHDVTDALGIALCDILRGESRQSGVPPRTNSRRKSGTGGSWEQFVRQSPNVVVRS.

Active-site residues include Asp7, Glu67, and Asp140. Mg(2+)-binding residues include Asp7, Glu67, and Asp140. Residues 158 to 192 form a disordered region; it reads RQSGVPPRTNSRRKSGTGGSWEQFVRQSPNVVVRS. A compositionally biased stretch (polar residues) spans 182 to 192; that stretch reads VRQSPNVVVRS.

The protein belongs to the RuvC family. In terms of assembly, homodimer which binds Holliday junction (HJ) DNA. The HJ becomes 2-fold symmetrical on binding to RuvC with unstacked arms; it has a different conformation from HJ DNA in complex with RuvA. In the full resolvosome a probable DNA-RuvA(4)-RuvB(12)-RuvC(2) complex forms which resolves the HJ. Requires Mg(2+) as cofactor.

The protein localises to the cytoplasm. It catalyses the reaction Endonucleolytic cleavage at a junction such as a reciprocal single-stranded crossover between two homologous DNA duplexes (Holliday junction).. The RuvA-RuvB-RuvC complex processes Holliday junction (HJ) DNA during genetic recombination and DNA repair. Endonuclease that resolves HJ intermediates. Cleaves cruciform DNA by making single-stranded nicks across the HJ at symmetrical positions within the homologous arms, yielding a 5'-phosphate and a 3'-hydroxyl group; requires a central core of homology in the junction. The consensus cleavage sequence is 5'-(A/T)TT(C/G)-3'. Cleavage occurs on the 3'-side of the TT dinucleotide at the point of strand exchange. HJ branch migration catalyzed by RuvA-RuvB allows RuvC to scan DNA until it finds its consensus sequence, where it cleaves and resolves the cruciform DNA. This chain is Crossover junction endodeoxyribonuclease RuvC, found in Chlorobium chlorochromatii (strain CaD3).